Here is a 122-residue protein sequence, read N- to C-terminus: Double-headed protease inhibitor, submandibular gland (122 aa).

Kazal-like domains are found at residues 10–70 (GGRK…KCDI) and 71–121 (ECPQ…QCQS). 6 disulfide bridges follow: Cys16–Cys50, Cys28–Cys47, Cys36–Cys68, Cys72–Cys101, Cys79–Cys98, and Cys87–Cys119.

The protein resides in the secreted. Functionally, this inhibitor is composed of two homologous actively inhibiting halves: one which inhibits trypsin, the other which inhibits elastase. This chain is Double-headed protease inhibitor, submandibular gland, found in Mustela lutreola (European mink).